A 66-amino-acid polypeptide reads, in one-letter code: Large ribosomal subunit protein bL33c (66 aa).

This sequence belongs to the bacterial ribosomal protein bL33 family.

It localises to the plastid. It is found in the chloroplast. The chain is Large ribosomal subunit protein bL33c from Citrus sinensis (Sweet orange).